The primary structure comprises 398 residues: Polyferredoxin protein VhuB (398 aa).

4Fe-4S ferredoxin-type domains lie at 2 to 31 (AGIK…IAPF), 25 to 53 (AIEI…VENN), 54 to 83 (GKLI…VDDR), 82 to 111 (DRFP…IPGK), 123 to 152 (QEPI…IEDE), 152 to 181 (ELAV…VAGK), 191 to 219 (KSFT…YNRE), 220 to 249 (DLIV…LEVE), 259 to 291 (EGLV…MINQ), 300 to 331 (TKTD…MGKI), and 339 to 368 (NRIE…LTGD). [4Fe-4S] cluster is bound by residues Cys-11, Cys-14, Cys-17, Cys-21, Cys-34, Cys-37, Cys-40, Cys-44, Cys-63, Cys-66, Cys-69, Cys-73, Cys-91, Cys-94, Cys-97, Cys-101, Cys-132, Cys-135, Cys-138, Cys-142, Cys-161, Cys-164, Cys-167, Cys-171, Cys-199, Cys-202, Cys-205, Cys-209, Cys-229, Cys-232, Cys-235, Cys-239, Cys-268, Cys-271, Cys-274, Cys-278, Cys-311, Cys-314, Cys-317, Cys-321, Cys-348, Cys-351, Cys-354, Cys-358, Cys-377, Cys-380, Cys-383, and Cys-387.

[4Fe-4S] cluster is required as a cofactor.

This chain is Polyferredoxin protein VhuB (vhuB), found in Methanococcus voltae.